Here is a 177-residue protein sequence, read N- to C-terminus: Peptidyl-tRNA hydrolase (177 aa).

Tyr12 contributes to the tRNA binding site. His17 functions as the Proton acceptor in the catalytic mechanism. TRNA is bound by residues Phe63, Asn65, and Asn111.

Belongs to the PTH family. As to quaternary structure, monomer.

Its subcellular location is the cytoplasm. The catalysed reaction is an N-acyl-L-alpha-aminoacyl-tRNA + H2O = an N-acyl-L-amino acid + a tRNA + H(+). In terms of biological role, hydrolyzes ribosome-free peptidyl-tRNAs (with 1 or more amino acids incorporated), which drop off the ribosome during protein synthesis, or as a result of ribosome stalling. Its function is as follows. Catalyzes the release of premature peptidyl moieties from peptidyl-tRNA molecules trapped in stalled 50S ribosomal subunits, and thus maintains levels of free tRNAs and 50S ribosomes. The sequence is that of Peptidyl-tRNA hydrolase from Buchnera aphidicola subsp. Acyrthosiphon pisum (strain 5A).